Consider the following 986-residue polypeptide: Bifunctional glutamine synthetase adenylyltransferase/adenylyl-removing enzyme (986 aa).

The interval 1–482 is adenylyl removase; it reads MVTTVISNVK…RYGRLFAGEE (482 aa). The adenylyl transferase stretch occupies residues 486 to 986; it reads SRFGSLVFTG…RAAYEAVVKG (501 aa).

This sequence belongs to the GlnE family. It depends on Mg(2+) as a cofactor.

The enzyme catalyses [glutamine synthetase]-O(4)-(5'-adenylyl)-L-tyrosine + phosphate = [glutamine synthetase]-L-tyrosine + ADP. It carries out the reaction [glutamine synthetase]-L-tyrosine + ATP = [glutamine synthetase]-O(4)-(5'-adenylyl)-L-tyrosine + diphosphate. Involved in the regulation of glutamine synthetase GlnA, a key enzyme in the process to assimilate ammonia. When cellular nitrogen levels are high, the C-terminal adenylyl transferase (AT) inactivates GlnA by covalent transfer of an adenylyl group from ATP to specific tyrosine residue of GlnA, thus reducing its activity. Conversely, when nitrogen levels are low, the N-terminal adenylyl removase (AR) activates GlnA by removing the adenylyl group by phosphorolysis, increasing its activity. The regulatory region of GlnE binds the signal transduction protein PII (GlnB) which indicates the nitrogen status of the cell. The sequence is that of Bifunctional glutamine synthetase adenylyltransferase/adenylyl-removing enzyme from Caulobacter vibrioides (strain ATCC 19089 / CIP 103742 / CB 15) (Caulobacter crescentus).